The following is a 48-amino-acid chain: ATP synthase protein 8 (48 aa).

Residues 12 to 32 form a helical membrane-spanning segment; the sequence is LLTFGMLAISMLLYLVSTIIL.

It belongs to the ATPase protein 8 family. In terms of assembly, F-type ATPases have 2 components, CF(1) - the catalytic core - and CF(0) - the membrane proton channel.

The protein localises to the mitochondrion membrane. Functionally, mitochondrial membrane ATP synthase (F(1)F(0) ATP synthase or Complex V) produces ATP from ADP in the presence of a proton gradient across the membrane which is generated by electron transport complexes of the respiratory chain. F-type ATPases consist of two structural domains, F(1) - containing the extramembraneous catalytic core and F(0) - containing the membrane proton channel, linked together by a central stalk and a peripheral stalk. During catalysis, ATP synthesis in the catalytic domain of F(1) is coupled via a rotary mechanism of the central stalk subunits to proton translocation. Part of the complex F(0) domain. Minor subunit located with subunit a in the membrane. This chain is ATP synthase protein 8 (ATP8), found in Debaryomyces hansenii (strain ATCC 36239 / CBS 767 / BCRC 21394 / JCM 1990 / NBRC 0083 / IGC 2968) (Yeast).